The sequence spans 327 residues: Zinc transport protein ZntB (327 aa).

The Cytoplasmic portion of the chain corresponds to 1–271 (METIYGSSLK…AMNRRTYTMS (271 aa)). The helical transmembrane segment at 272 to 292 (LLAMIFLPTTFLTGLFGVNLG) threads the bilayer. The Periplasmic portion of the chain corresponds to 293-300 (GIPGNEYY). A helical membrane pass occupies residues 301–321 (LGFAIFCLLLFGLVLFVAWWL). The Cytoplasmic portion of the chain corresponds to 322–327 (KKSKWL).

The protein belongs to the CorA metal ion transporter (MIT) (TC 1.A.35) family.

It is found in the cell inner membrane. The enzyme catalyses Zn(2+)(out) + H(+)(out) = Zn(2+)(in) + H(+)(in). In terms of biological role, zinc transporter. Acts as a Zn(2+):proton symporter, which likely mediates zinc ion uptake. This chain is Zinc transport protein ZntB, found in Photorhabdus laumondii subsp. laumondii (strain DSM 15139 / CIP 105565 / TT01) (Photorhabdus luminescens subsp. laumondii).